We begin with the raw amino-acid sequence, 159 residues long: Phosphopantetheine adenylyltransferase (159 aa).

T10 provides a ligand contact to substrate. ATP-binding positions include 10–11 and H18; that span reads TF. The substrate site is built by K42, M74, and R88. Residues 89–91, E99, and 124–130 contribute to the ATP site; these read GLR and WSFISSS.

Belongs to the bacterial CoaD family. Homohexamer. Mg(2+) is required as a cofactor.

Its subcellular location is the cytoplasm. It carries out the reaction (R)-4'-phosphopantetheine + ATP + H(+) = 3'-dephospho-CoA + diphosphate. It functions in the pathway cofactor biosynthesis; coenzyme A biosynthesis; CoA from (R)-pantothenate: step 4/5. In terms of biological role, reversibly transfers an adenylyl group from ATP to 4'-phosphopantetheine, yielding dephospho-CoA (dPCoA) and pyrophosphate. The polypeptide is Phosphopantetheine adenylyltransferase (Yersinia pestis).